The chain runs to 166 residues: NAD(P)H-quinone oxidoreductase subunit I, chloroplastic (166 aa).

2 4Fe-4S ferredoxin-type domains span residues 55-84 (GRIH…VDWK) and 95-124 (LNYS…MTEE). [4Fe-4S] cluster contacts are provided by cysteine 64, cysteine 67, cysteine 70, cysteine 74, cysteine 104, cysteine 107, cysteine 110, and cysteine 114.

The protein belongs to the complex I 23 kDa subunit family. As to quaternary structure, NDH is composed of at least 16 different subunits, 5 of which are encoded in the nucleus. The cofactor is [4Fe-4S] cluster.

The protein localises to the plastid. It localises to the chloroplast thylakoid membrane. The enzyme catalyses a plastoquinone + NADH + (n+1) H(+)(in) = a plastoquinol + NAD(+) + n H(+)(out). It carries out the reaction a plastoquinone + NADPH + (n+1) H(+)(in) = a plastoquinol + NADP(+) + n H(+)(out). NDH shuttles electrons from NAD(P)H:plastoquinone, via FMN and iron-sulfur (Fe-S) centers, to quinones in the photosynthetic chain and possibly in a chloroplast respiratory chain. The immediate electron acceptor for the enzyme in this species is believed to be plastoquinone. Couples the redox reaction to proton translocation, and thus conserves the redox energy in a proton gradient. This is NAD(P)H-quinone oxidoreductase subunit I, chloroplastic from Chamaechaenactis scaposa (Fullstem).